Here is a 109-residue protein sequence, read N- to C-terminus: Spermidine export protein MdtI (109 aa).

The next 4 helical transmembrane spans lie at 6 to 26 (FYPI…NILL), 36 to 56 (WLGI…AQAV), 64 to 84 (AYAM…WILF), and 88 to 108 (LNYK…MIKL).

The protein belongs to the drug/metabolite transporter (DMT) superfamily. Small multidrug resistance (SMR) (TC 2.A.7.1) family. MdtI subfamily. As to quaternary structure, forms a complex with MdtJ.

The protein localises to the cell inner membrane. In terms of biological role, catalyzes the excretion of spermidine. The sequence is that of Spermidine export protein MdtI from Yersinia pseudotuberculosis serotype I (strain IP32953).